Consider the following 593-residue polypeptide: Proline dehydrogenase 1, mitochondrial (593 aa).

The segment at 24-44 (PAAREQPAAGPGAEPVCGPAE) is disordered. An N6-acetyllysine mark is found at Lys368 and Lys479.

It belongs to the proline oxidase family. Requires FAD as cofactor.

Its subcellular location is the mitochondrion matrix. The catalysed reaction is L-proline + a quinone = (S)-1-pyrroline-5-carboxylate + a quinol + H(+). Its pathway is amino-acid degradation; L-proline degradation into L-glutamate; L-glutamate from L-proline: step 1/2. Its function is as follows. Converts proline to delta-1-pyrroline-5-carboxylate. The polypeptide is Proline dehydrogenase 1, mitochondrial (Bos taurus (Bovine)).